The primary structure comprises 361 residues: AT-hook motif nuclear-localized protein 12 (361 aa).

Disordered regions lie at residues 29–143 (SQVA…GRKQ) and 286–361 (NNKT…LTRG). Polar residues predominate over residues 48–59 (SNPNIHHPQANN). A compositionally biased stretch (pro residues) spans 85–95 (QPPPPPPPPEE). The Bipartite nuclear localization signal signature appears at 99–107 (KRKRGRPRK). 2 DNA-binding regions (a.T hook) span residues 99 to 111 (KRKR…YGEP) and 130 to 142 (KRAR…TGRK). One can recognise a PPC domain in the interval 154 to 297 (TSAGLAFAPH…KTIRQEKEPN (144 aa)). The segment covering 306 to 322 (ETTPGSAAEPAASAGQQ) has biased composition (low complexity).

As to quaternary structure, homodimer. Interacts with AHL27, AHL29 and ATAF2/NAC081.

The protein resides in the nucleus. Its function is as follows. Transcription factor that specifically binds AT-rich DNA sequences related to the nuclear matrix attachment regions (MARs). This chain is AT-hook motif nuclear-localized protein 12, found in Arabidopsis thaliana (Mouse-ear cress).